Consider the following 126-residue polypeptide: Small ribosomal subunit protein bS6 (126 aa).

A disordered region spans residues 101–126; it reads VMMKAKEERTAKREDAAPRAEEAAAE. The segment covering 104 to 126 has biased composition (basic and acidic residues); sequence KAKEERTAKREDAAPRAEEAAAE.

Belongs to the bacterial ribosomal protein bS6 family.

Its function is as follows. Binds together with bS18 to 16S ribosomal RNA. The sequence is that of Small ribosomal subunit protein bS6 from Aliivibrio salmonicida (strain LFI1238) (Vibrio salmonicida (strain LFI1238)).